Reading from the N-terminus, the 148-residue chain is MKLILTHEVDGLGSPGDVVEVKDGYGRNYLLPRGFAIKWTRGAQKQIDSIRRARAAREIRSLDEAKQIAEQLGSLKVRLNQRAGDNGRLFGSVTSTDVAEAVKAAGGPEVDKRRIQIRNPIKSVGDYTVEIRLHPEVNVSLPIEVVGV.

This sequence belongs to the bacterial ribosomal protein bL9 family.

Functionally, binds to the 23S rRNA. The chain is Large ribosomal subunit protein bL9 from Thermobifida fusca (strain YX).